We begin with the raw amino-acid sequence, 444 residues long: MVDHISPRASPGPIRSSQTRRARKLRDSCTSCASSKVRCTKEKPACARCIERGLACQYMVSKRMGRNPRAPSPLDSTRRPSESLPSARSEQGLPAHNTYSTPHAHTQAHTHAHSHPQPHPQSHPQSNQPPHALPTPNGSSSVSAIFSHQSPPPPVETQGLGGDLAGQEQSTLSSLTVDSEFGGSLQSMEHGNHVDFLAESTGSLFDAFLEVGTPMIDPFLESAPLPPFQARYCCFSLALQTLTHLFPHAPLGCQLRLTDGEDSSCNLMTTDMVISGNKRATDAVRKILGCSCAQDGYLLSMVVLIVLKVLAWYAAAAGTQCTSTAAGGETNSGSCSNSPATVSSGCLTEERVLHLPSMMGEDCVDEEDQPRVAAQLVLSELHRVQSLVNLLAKRLQEGGDDAAGIPAHHPASPFSLLGFSGLEANLRHRLRAVSSDIIDYLHRE.

Positions 1–25 are disordered; it reads MVDHISPRASPGPIRSSQTRRARKL. The segment at residues 29-56 is a DNA-binding region (zn(2)-C6 fungal-type); the sequence is CTSCASSKVRCTKEKPACARCIERGLAC. Positions 64-174 are disordered; sequence MGRNPRAPSP…AGQEQSTLSS (111 aa). Basic residues predominate over residues 106 to 116; sequence TQAHTHAHSHP. Over residues 120-130 the composition is skewed to low complexity; it reads PQSHPQSNQPP. Residues 136–149 show a composition bias toward polar residues; the sequence is PNGSSSVSAIFSHQ.

In terms of assembly, interacts with aflS.

It localises to the nucleus. In terms of biological role, transcription factor; part of the gene cluster that mediates the biosynthesis of aflatoxin, a polyketide-derived furanocoumarin which is part of the most toxic and carcinogenic compounds among the known mycotoxins. Binds to at least 17 genes in the aflatoxin biosynthetic cluster, leading to the activation of an enzymatic cascade reaction that results in aflatoxin biosynthesis. Promoter regions of several biosynthesis genes are bound by aflR in a dimeric form with a 5'-TCG(N5)CGA-3' binding motif. AflR also recognizes 5'-TTAGGCCTAA-3' and 5'-TCGCAGCCCGG-3' binding sequences. AflR achieves its binding specificity through a mechanism in which either two copies of aflR or its complex with aflS bind to target sites on DNA in a highly cooperative manner. AflS acts as a modulator of aflR's DNA-binding by decreasing its DNA-binding affinity. In addition to aflatoxin biosynthesis, also plays a positive role in the fungal growth, spore germination, sclerotial development, and carbohydrate metabolism. This chain is Aflatoxin biosynthesis regulatory protein, found in Aspergillus flavus (strain ATCC 200026 / FGSC A1120 / IAM 13836 / NRRL 3357 / JCM 12722 / SRRC 167).